Here is a 443-residue protein sequence, read N- to C-terminus: Eukaryotic translation initiation factor 5 (443 aa).

29–36 serves as a coordination point for GTP; the sequence is GRGNGIKT. Positions 147-178 are enriched in basic and acidic residues; that stretch reads PEVKKGSKDKKAMRRAEKERLKEGEAADEELK. Disordered regions lie at residues 147 to 244 and 271 to 293; these read PEVK…LTDT and EPEK…NSKN. Residues 179–188 show a composition bias toward basic residues; that stretch reads KVKKEVKKKG. A compositionally biased stretch (basic and acidic residues) spans 207 to 227; sequence SGSDEDRRSPTHKQIEEKEEA. Acidic residues predominate over residues 228-237; it reads KDEDDDDDDG. Over residues 280 to 291 the composition is skewed to low complexity; the sequence is SNQNGGSQNGNS. One can recognise a W2 domain in the interval 284–443; it reads GGSQNGNSKN…QNAESESDEE (160 aa).

The protein belongs to the eIF-2-beta/eIF-5 family.

Functionally, catalyzes the hydrolysis of GTP bound to the 40S ribosomal initiation complex (40S.mRNA.Met-tRNA[F].eIF-2.GTP) with the subsequent joining of a 60S ribosomal subunit resulting in the release of eIF-2 and the guanine nucleotide. The subsequent joining of a 60S ribosomal subunit results in the formation of a functional 80S initiation complex (80S.mRNA.Met-tRNA[F]). The chain is Eukaryotic translation initiation factor 5 (EIF5) from Phaseolus vulgaris (Kidney bean).